A 148-amino-acid chain; its full sequence is Deoxyuridine 5'-triphosphate nucleotidohydrolase (148 aa).

Substrate contacts are provided by residues 67–69 (RSG), Asn-80, 84–86 (LID), and Met-94.

The protein belongs to the dUTPase family. Mg(2+) serves as cofactor.

The catalysed reaction is dUTP + H2O = dUMP + diphosphate + H(+). It participates in pyrimidine metabolism; dUMP biosynthesis; dUMP from dCTP (dUTP route): step 2/2. Its function is as follows. This enzyme is involved in nucleotide metabolism: it produces dUMP, the immediate precursor of thymidine nucleotides and it decreases the intracellular concentration of dUTP so that uracil cannot be incorporated into DNA. The chain is Deoxyuridine 5'-triphosphate nucleotidohydrolase from Burkholderia multivorans (strain ATCC 17616 / 249).